Here is a 429-residue protein sequence, read N- to C-terminus: Zygotic gap protein knirps (429 aa).

Residues 2-78 constitute a DNA-binding region (nuclear receptor); it reads NQTCKVCGEP…VGMSKGGSRY (77 aa). 2 consecutive NR C4-type zinc fingers follow at residues 5-25 and 42-66; these read CKVC…CEGC and CKNE…LRKC. Low complexity predominate over residues 112–126; the sequence is SVGGAPSASSPVGSP. Disordered regions lie at residues 112–148, 223–250, 338–357, and 375–397; these read SVGG…QQQQ, QSVD…SSAR, TSRS…QEVE, and SSSS…AEVK. Polar residues-rich tracts occupy residues 225–237 and 338–349; these read VDSV…FSPA and TSRSSVHSFNDS. The span at 375 to 393 shows a compositional bias: low complexity; sequence SSSSSSHSAAHSPNTTTAH.

Belongs to the nuclear hormone receptor family. NR0 subfamily.

The protein localises to the nucleus. Functionally, transcriptional repressor. Binds to multiple sites in the eve stripe 3 enhancer element. Plays an essential role in the segmentation process both by refining the expression patterns of gap genes and by establishing pair-rules stripes of gene expression. In Drosophila melanogaster (Fruit fly), this protein is Zygotic gap protein knirps (kni).